A 689-amino-acid chain; its full sequence is DNA-directed RNA polymerase subunit beta' (689 aa).

Residues cysteine 69, cysteine 71, cysteine 87, and cysteine 90 each coordinate Zn(2+). The Mg(2+) site is built by aspartate 489, aspartate 491, and aspartate 493.

It belongs to the RNA polymerase beta' chain family. RpoC1 subfamily. In terms of assembly, in plastids the minimal PEP RNA polymerase catalytic core is composed of four subunits: alpha, beta, beta', and beta''. When a (nuclear-encoded) sigma factor is associated with the core the holoenzyme is formed, which can initiate transcription. Mg(2+) serves as cofactor. Requires Zn(2+) as cofactor.

It localises to the plastid. It is found in the chloroplast. The catalysed reaction is RNA(n) + a ribonucleoside 5'-triphosphate = RNA(n+1) + diphosphate. DNA-dependent RNA polymerase catalyzes the transcription of DNA into RNA using the four ribonucleoside triphosphates as substrates. This chain is DNA-directed RNA polymerase subunit beta', found in Lactuca sativa (Garden lettuce).